The chain runs to 353 residues: MTIAIGSTYQEKRTWFDDADDWLRQDRFVFVGWSGLLLFPCAYFALGGWFTGTTFVTSWYTHGLATSYLEGCNFLTAAVSTPANSMAHSLLFLWGPEAQGDFTRWCQLGGLWTFVALHGSFGLIGFMLRQFEIARSVNLRPYNAIAFSAPIAVFVSVFLIYPLGQSGWFFAPSFGVAAIFRFILFFQGFHNWTLNPFHMMGVAGVLGAALLCAIHGATVENTLFEDGDGANTFRAFNPTQAEETYSMVTANRFWSQIFGVAFSNKRWLHFFMLLVPVTGLWMSAIGVVGLALNLRAYDFVSQEIRAAEDPEFETFYTKNILLNEGIRAWMAAQDQPHERLVFPEEVLPRGNAL.

Threonine 2 bears the N-acetylthreonine mark. Threonine 2 bears the Phosphothreonine mark. Residues 41 to 61 traverse the membrane as a helical segment; it reads CAYFALGGWFTGTTFVTSWYT. Residue histidine 118 coordinates chlorophyll a. A helical membrane pass occupies residues 125-141; it reads GFMLRQFEIARSVNLRP. Pheophytin a is bound by residues glutamine 130 and asparagine 143. The helical transmembrane segment at 153-166 threads the bilayer; the sequence is VFVSVFLIYPLGQS. Histidine 198 provides a ligand contact to chlorophyll a. The chain crosses the membrane as a helical span at residues 208 to 228; the sequence is AALLCAIHGATVENTLFEDGD. Positions 215 and 262 each coordinate a plastoquinone. Residue histidine 215 participates in Fe cation binding. Histidine 269 serves as a coordination point for Fe cation. A helical transmembrane segment spans residues 279–295; that stretch reads GLWMSAIGVVGLALNLR.

Belongs to the reaction center PufL/M/PsbA/D family. In terms of assembly, PSII is composed of 1 copy each of membrane proteins PsbA, PsbB, PsbC, PsbD, PsbE, PsbF, PsbH, PsbI, PsbJ, PsbK, PsbL, PsbM, PsbT, PsbX, PsbY, PsbZ, Psb30/Ycf12, at least 3 peripheral proteins of the oxygen-evolving complex and a large number of cofactors. It forms dimeric complexes. The cofactor is The D1/D2 heterodimer binds P680, chlorophylls that are the primary electron donor of PSII, and subsequent electron acceptors. It shares a non-heme iron and each subunit binds pheophytin, quinone, additional chlorophylls, carotenoids and lipids. There is also a Cl(-1) ion associated with D1 and D2, which is required for oxygen evolution. The PSII complex binds additional chlorophylls, carotenoids and specific lipids..

It localises to the plastid. The protein localises to the chloroplast thylakoid membrane. It carries out the reaction 2 a plastoquinone + 4 hnu + 2 H2O = 2 a plastoquinol + O2. Its function is as follows. Photosystem II (PSII) is a light-driven water:plastoquinone oxidoreductase that uses light energy to abstract electrons from H(2)O, generating O(2) and a proton gradient subsequently used for ATP formation. It consists of a core antenna complex that captures photons, and an electron transfer chain that converts photonic excitation into a charge separation. The D1/D2 (PsbA/PsbD) reaction center heterodimer binds P680, the primary electron donor of PSII as well as several subsequent electron acceptors. D2 is needed for assembly of a stable PSII complex. In Tetradesmus obliquus (Green alga), this protein is Photosystem II D2 protein.